The sequence spans 378 residues: UDP-N-acetylenolpyruvoylglucosamine reductase (378 aa).

In terms of domain architecture, FAD-binding PCMH-type spans 15 to 185 (VGGTPERLLE…LSVDLELADH (171 aa)). The active site involves arginine 163. Serine 248 acts as the Proton donor in catalysis. Glutamate 370 is a catalytic residue.

Belongs to the MurB family. The cofactor is FAD.

The protein resides in the cytoplasm. It catalyses the reaction UDP-N-acetyl-alpha-D-muramate + NADP(+) = UDP-N-acetyl-3-O-(1-carboxyvinyl)-alpha-D-glucosamine + NADPH + H(+). The protein operates within cell wall biogenesis; peptidoglycan biosynthesis. Functionally, cell wall formation. In Leifsonia xyli subsp. xyli (strain CTCB07), this protein is UDP-N-acetylenolpyruvoylglucosamine reductase.